The sequence spans 371 residues: MMIKDSTPKADGFYMPAEFSPHAGTFLIWPVRPGSWTNAGADVQPVFVELIREISAVEELYLLVDEAHRPQAENMLKDLPQQHIHYLAIPTDDAWARDMGPTYVIDGQGRRRGINWRFNAWGGDFDGLYPDYGQDDAAAEKMCAALGDELYDAGDFVLEGGSIHVDGEGTVVVTEACLLSQGRNPDLSKEQIEAMLLKYLGAEKVIWLPRGIHNDETNEHVDNVFAFVRPGEVLLAWTDDKDDPQYELSQADLEVLESATDARGRKFVIHKLPIPQEPVCITAEEADSFTFEEGEDRREPGERLAASYVNFYLCNGKVILPQFGDEMDIEAQRILGKCFPERKVVPLPAKAVIVGGGNFHCLTQQIPAIER.

Cys-361 (amidino-cysteine intermediate) is an active-site residue.

It belongs to the agmatine deiminase family.

The catalysed reaction is agmatine + H2O = N-carbamoylputrescine + NH4(+). This chain is Putative agmatine deiminase, found in Selenomonas ruminantium.